Reading from the N-terminus, the 381-residue chain is 1-deoxy-D-xylulose 5-phosphate reductoisomerase (381 aa).

8 residues coordinate NADPH: Thr10, Gly11, Ser12, Ile13, Gly36, Lys37, Asn38, and Asn122. Lys123 contributes to the 1-deoxy-D-xylulose 5-phosphate binding site. Glu124 contacts NADPH. Asp148 lines the Mn(2+) pocket. Residues Ser149, Glu150, Ser173, and His196 each coordinate 1-deoxy-D-xylulose 5-phosphate. Mn(2+) is bound at residue Glu150. Residue Gly202 coordinates NADPH. 1-deoxy-D-xylulose 5-phosphate-binding residues include Ser209, Asn214, Lys215, and Glu218. Glu218 is a Mn(2+) binding site.

This sequence belongs to the DXR family. The cofactor is Mg(2+). Mn(2+) is required as a cofactor.

The enzyme catalyses 2-C-methyl-D-erythritol 4-phosphate + NADP(+) = 1-deoxy-D-xylulose 5-phosphate + NADPH + H(+). The protein operates within isoprenoid biosynthesis; isopentenyl diphosphate biosynthesis via DXP pathway; isopentenyl diphosphate from 1-deoxy-D-xylulose 5-phosphate: step 1/6. Functionally, catalyzes the NADPH-dependent rearrangement and reduction of 1-deoxy-D-xylulose-5-phosphate (DXP) to 2-C-methyl-D-erythritol 4-phosphate (MEP). This is 1-deoxy-D-xylulose 5-phosphate reductoisomerase from Desulfitobacterium hafniense (strain Y51).